The primary structure comprises 407 residues: Methylenetetrahydrofolate--tRNA-(uracil-5-)-methyltransferase TrmFO (407 aa).

Glycine 9–glycine 14 lines the FAD pocket.

The protein belongs to the MnmG family. TrmFO subfamily. FAD serves as cofactor.

Its subcellular location is the cytoplasm. The catalysed reaction is uridine(54) in tRNA + (6R)-5,10-methylene-5,6,7,8-tetrahydrofolate + NADH + H(+) = 5-methyluridine(54) in tRNA + (6S)-5,6,7,8-tetrahydrofolate + NAD(+). It catalyses the reaction uridine(54) in tRNA + (6R)-5,10-methylene-5,6,7,8-tetrahydrofolate + NADPH + H(+) = 5-methyluridine(54) in tRNA + (6S)-5,6,7,8-tetrahydrofolate + NADP(+). In terms of biological role, catalyzes the folate-dependent formation of 5-methyl-uridine at position 54 (M-5-U54) in all tRNAs. The sequence is that of Methylenetetrahydrofolate--tRNA-(uracil-5-)-methyltransferase TrmFO from Lactobacillus helveticus (strain DPC 4571).